Consider the following 429-residue polypeptide: 3-phosphoshikimate 1-carboxyvinyltransferase (429 aa).

Positions 20, 21, and 25 each coordinate 3-phosphoshikimate. Lys20 lines the phosphoenolpyruvate pocket. Residues Gly89 and Arg118 each coordinate phosphoenolpyruvate. Positions 164, 165, 166, 192, 311, and 338 each coordinate 3-phosphoshikimate. Gln166 is a phosphoenolpyruvate binding site. Asp311 acts as the Proton acceptor in catalysis. Arg342 and Arg384 together coordinate phosphoenolpyruvate.

Belongs to the EPSP synthase family. Monomer.

The protein resides in the cytoplasm. It catalyses the reaction 3-phosphoshikimate + phosphoenolpyruvate = 5-O-(1-carboxyvinyl)-3-phosphoshikimate + phosphate. It functions in the pathway metabolic intermediate biosynthesis; chorismate biosynthesis. In terms of biological role, catalyzes the transfer of the enolpyruvyl moiety of phosphoenolpyruvate (PEP) to the 5-hydroxyl of shikimate-3-phosphate (S3P) to produce enolpyruvyl shikimate-3-phosphate and inorganic phosphate. The chain is 3-phosphoshikimate 1-carboxyvinyltransferase from Methanococcus maripaludis (strain C5 / ATCC BAA-1333).